A 340-amino-acid polypeptide reads, in one-letter code: DNA-directed RNA polymerase subunit alpha (340 aa).

Residues 1-236 (MSVIQKNWQE…DQLQLFINFE (236 aa)) form an alpha N-terminal domain (alpha-NTD) region. An alpha C-terminal domain (alpha-CTD) region spans residues 252-340 (FNKNLLRKVD…DLAKKLEEPY (89 aa)).

The protein belongs to the RNA polymerase alpha chain family. As to quaternary structure, homodimer. The RNAP catalytic core consists of 2 alpha, 1 beta, 1 beta' and 1 omega subunit. When a sigma factor is associated with the core the holoenzyme is formed, which can initiate transcription.

It catalyses the reaction RNA(n) + a ribonucleoside 5'-triphosphate = RNA(n+1) + diphosphate. DNA-dependent RNA polymerase catalyzes the transcription of DNA into RNA using the four ribonucleoside triphosphates as substrates. The chain is DNA-directed RNA polymerase subunit alpha from Rhodospirillum rubrum (strain ATCC 11170 / ATH 1.1.1 / DSM 467 / LMG 4362 / NCIMB 8255 / S1).